A 148-amino-acid polypeptide reads, in one-letter code: MTIIEVKIKKLENFSGNLPAYATEHSAGVDLIAANEQTILIKVGSIQLIPTGIAIALPDSFEAQIRPRSGLAIKHGITVANSPGTIDADYRGEIKVLLINLGKKDFLIERGMRIAQMIIAKYERVLWAETSILTETMRGRGGFGSTGL.

Residues 68-70, Asn-81, 85-87, and Lys-95 contribute to the substrate site; these read RSG and TID.

It belongs to the dUTPase family. Requires Mg(2+) as cofactor.

It catalyses the reaction dUTP + H2O = dUMP + diphosphate + H(+). It participates in pyrimidine metabolism; dUMP biosynthesis; dUMP from dCTP (dUTP route): step 2/2. Its function is as follows. This enzyme is involved in nucleotide metabolism: it produces dUMP, the immediate precursor of thymidine nucleotides and it decreases the intracellular concentration of dUTP so that uracil cannot be incorporated into DNA. The protein is Deoxyuridine 5'-triphosphate nucleotidohydrolase of Rickettsia typhi (strain ATCC VR-144 / Wilmington).